A 508-amino-acid chain; its full sequence is CUGBP Elav-like family member 2 (508 aa).

2 necessary for RNA-binding, TNNT2 exon 5 and NMDA R1 exon 21 inclusion regions span residues 1 to 283 (MRCP…LQNL) and 357 to 508 (LAGM…SKPY). RRM domains follow at residues 40–123 (IKMF…PADS), 132–212 (RKLF…FADT), and 423–501 (ANLF…LKRS).

The protein belongs to the CELF/BRUNOL family. Interacts with A1CF. Expressed in tongue, spleen and brain (at protein level). Expressed in liver, thigh, stomach, lung and heart to very low levels (at protein level). Expressed in heart, brain, lung and muscle.

The protein resides in the nucleus. It localises to the cytoplasm. Functionally, RNA-binding protein implicated in the regulation of several post-transcriptional events. Involved in pre-mRNA alternative splicing, mRNA translation and stability. Mediates exon inclusion and/or exclusion in pre-mRNA that are subject to tissue-specific and developmentally regulated alternative splicing. Specifically activates exon 5 inclusion of TNNT2 in embryonic, but not adult, skeletal muscle. Activates TNNT2 exon 5 inclusion by antagonizing the repressive effect of PTB. Acts both as an activator and as a repressor of a pair of coregulated exons: promotes inclusion of the smooth muscle (SM) exon but exclusion of the non-muscle (NM) exon in actinin pre-mRNAs. Promotes inclusion of exonS 21 and exclusion of exon 5 of the NMDA receptor R1 pre-mRNA. Involved in the apoB RNA editing activity. Increases COX2 mRNA stability and inhibits COX2 mRNA translation in epithelial cells after radiation injury. Modulates the cellular apoptosis program by regulating COX2-mediated prostaglandin E2 (PGE2) expression. Binds to (CUG)n triplet repeats in the 3'-UTR of transcripts such as DMPK. Binds to the muscle-specific splicing enhancer (MSE) intronic sites flanking the TNNT2 alternative exon 5. Binds preferentially to UG-rich sequences, in particular UG repeat and UGUU motifs. Binds to apoB mRNA, specifically to AU-rich sequences located immediately upstream of the edited cytidine. Binds AU-rich sequences in the 3'-UTR of COX2 mRNA. Binds to an intronic RNA element responsible for the silencing of exon 21 splicing. Binds to (CUG)n repeats. May be a specific regulator of miRNA biogenesis. Binds to primary microRNA pri-MIR140 and, with CELF1, negatively regulates the processing to mature miRNA. The chain is CUGBP Elav-like family member 2 (Celf2) from Mus musculus (Mouse).